The following is a 433-amino-acid chain: Histidinol dehydrogenase (433 aa).

Residues Y130, Q191, and N214 each coordinate NAD(+). Residues S237, Q259, and H262 each coordinate substrate. Zn(2+) contacts are provided by Q259 and H262. Active-site proton acceptor residues include E327 and H328. Residues H328, D361, E415, and H420 each coordinate substrate. D361 is a binding site for Zn(2+). H420 contacts Zn(2+).

It belongs to the histidinol dehydrogenase family. Requires Zn(2+) as cofactor.

The enzyme catalyses L-histidinol + 2 NAD(+) + H2O = L-histidine + 2 NADH + 3 H(+). It functions in the pathway amino-acid biosynthesis; L-histidine biosynthesis; L-histidine from 5-phospho-alpha-D-ribose 1-diphosphate: step 9/9. In terms of biological role, catalyzes the sequential NAD-dependent oxidations of L-histidinol to L-histidinaldehyde and then to L-histidine. This Ruegeria pomeroyi (strain ATCC 700808 / DSM 15171 / DSS-3) (Silicibacter pomeroyi) protein is Histidinol dehydrogenase.